A 1649-amino-acid polypeptide reads, in one-letter code: PHD and RING finger domain-containing protein 1 (1649 aa).

Residues 1–79 (MDDDSLDELV…RSGSEDSEDD (79 aa)) form a disordered region. The residue at position 5 (Ser5) is a Phosphoserine. Over residues 54-79 (TDGEDEGASEEEDLEDRSGSEDSEDD) the composition is skewed to acidic residues. The RING-type; degenerate zinc-finger motif lies at 108–149 (CPICLNAFRDQAVGTPENCAHYFCLDCIVEWSKNANSCPVDR). The segment at 183 to 233 (PTFCEVCGRSDREDRLLLCDGCDAGYHMECLDPPLQEVPVDEWFCPECAAP) adopts a PHD-type zinc-finger fold. The tract at residues 324 to 398 (VYQRPLTPRT…TRSRIARTLG (75 aa)) is disordered. Thr330 is modified (phosphothreonine). Residues 334 to 353 (PARRKRKTRRRKKVPGRKKT) are compositionally biased toward basic residues. A compositionally biased stretch (low complexity) spans 354–366 (PSGPSAKSKSSAT). The span at 367–382 (RSKKRQHRVKKRRGKK) shows a compositional bias: basic residues. Phosphoserine is present on residues Ser445 and Ser455. Disordered stretches follow at residues 534–600 (KRAA…GAPV), 644–871 (SAAS…PKAQ), 888–1240 (FGTE…KAPL), and 1281–1395 (IQLD…PLLR). The segment covering 568–589 (SPAQGPSGNRPQSTGLSCQGRS) has biased composition (polar residues). Basic and acidic residues-rich tracts occupy residues 685 to 697 (IRRD…RDAA) and 727 to 742 (TRAE…REPG). The segment covering 786-796 (AHSSQLSSPGF) has biased composition (polar residues). Residues 802–812 (PVDDKEQRKEN) are compositionally biased toward basic and acidic residues. 6 positions are modified to phosphoserine: Ser814, Ser845, Ser846, Ser864, Ser867, and Ser915. Polar residues-rich tracts occupy residues 835 to 848 (PTGS…SSPE) and 859 to 871 (ITRT…PKAQ). The residue at position 917 (Thr917) is a Phosphothreonine. A phosphoserine mark is found at Ser936, Ser973, and Ser991. Residues 988–999 (RPPSRSRSTSSS) show a composition bias toward low complexity. Positions 1000 to 1011 (RSRKKAKRKRVS) are enriched in basic residues. Basic and acidic residues predominate over residues 1012 to 1030 (REHGRTRSGTRSESRDRSS). The span at 1043–1053 (RRQRSKAKSRR) shows a compositional bias: basic residues. The span at 1054-1063 (SSSDRSSSRE) shows a compositional bias: basic and acidic residues. A compositionally biased stretch (basic residues) spans 1064–1090 (RAKRKKAKDKSREHRRGPWGHSRRTSR). Positions 1091–1101 (SRSGSPGSSSY) are enriched in low complexity. Residues 1106–1118 (SRKKKKRRSASRP) are compositionally biased toward basic residues. A phosphoserine mark is found at Ser1124 and Ser1128. Basic and acidic residues-rich tracts occupy residues 1141 to 1151 (RSHERPDRKES) and 1181 to 1198 (REKW…KGAV). 2 positions are modified to phosphoserine: Ser1202 and Ser1229. Positions 1284-1297 (DDMSSPPSPESTDS) are enriched in low complexity. The span at 1345 to 1356 (HLLRPDAAEKAE) shows a compositional bias: basic and acidic residues. 3 positions are modified to phosphoserine: Ser1359, Ser1360, and Ser1371. Residue Thr1404 is modified to Phosphothreonine. 4 disordered regions span residues 1407 to 1439 (LQES…WDME), 1455 to 1486 (FPSH…AQPS), 1526 to 1556 (TPAS…EKTK), and 1630 to 1649 (MRRH…GAEG). Residues 1531 to 1540 (PASQATAASN) show a composition bias toward polar residues. Residues 1541–1556 (SEEKTPAPRLAAEKTK) show a composition bias toward basic and acidic residues. Residues 1549–1579 (RLAAEKTKKEEYMKKLHMQERAVEEVKLAIK) are a coiled coil.

Interacts with POLR2A (via the C-terminal domain).

The sequence is that of PHD and RING finger domain-containing protein 1 (PHRF1) from Homo sapiens (Human).